Reading from the N-terminus, the 540-residue chain is Na(+)/H(+) antiporter NhaS2 (540 aa).

Helical transmembrane passes span 29–49, 71–91, 117–137, 138–158, 207–227, 256–276, 296–316, 323–343, 358–378, and 389–409; these read ITTL…VALV, GLSV…ILIF, VVIS…LAWV, TAAG…IAAF, IFVA…LCVG, LGVS…NLAL, FGVN…SILL, LIAI…LLYL, VLIA…ALPL, and LVFS…PWVV.

It belongs to the monovalent cation:proton antiporter 1 (CPA1) transporter (TC 2.A.36) family.

Its subcellular location is the cell membrane. Functionally, required for Na(+) uptake into the cell, especially at low external Na(+) concentrations or low Na(+)/K(+) ratios. May be part of a sodium cycle that permits re-entry of sodium into the cell. This is Na(+)/H(+) antiporter NhaS2 (nhaS2) from Synechocystis sp. (strain ATCC 27184 / PCC 6803 / Kazusa).